The primary structure comprises 256 residues: Ribosomal RNA small subunit methyltransferase A (256 aa).

S-adenosyl-L-methionine-binding residues include His-12, Leu-14, Gly-39, Glu-60, Asp-81, and Asn-103.

The protein belongs to the class I-like SAM-binding methyltransferase superfamily. rRNA adenine N(6)-methyltransferase family. RsmA subfamily.

It is found in the cytoplasm. The catalysed reaction is adenosine(1518)/adenosine(1519) in 16S rRNA + 4 S-adenosyl-L-methionine = N(6)-dimethyladenosine(1518)/N(6)-dimethyladenosine(1519) in 16S rRNA + 4 S-adenosyl-L-homocysteine + 4 H(+). Functionally, specifically dimethylates two adjacent adenosines (A1518 and A1519) in the loop of a conserved hairpin near the 3'-end of 16S rRNA in the 30S particle. May play a critical role in biogenesis of 30S subunits. This Methylibium petroleiphilum (strain ATCC BAA-1232 / LMG 22953 / PM1) protein is Ribosomal RNA small subunit methyltransferase A.